Here is a 249-residue protein sequence, read N- to C-terminus: Ubiquinone biosynthesis O-methyltransferase (249 aa).

S-adenosyl-L-methionine is bound by residues Arg41, Gly72, Asp93, and Met136.

It belongs to the methyltransferase superfamily. UbiG/COQ3 family.

It carries out the reaction a 3-demethylubiquinol + S-adenosyl-L-methionine = a ubiquinol + S-adenosyl-L-homocysteine + H(+). The catalysed reaction is a 3-(all-trans-polyprenyl)benzene-1,2-diol + S-adenosyl-L-methionine = a 2-methoxy-6-(all-trans-polyprenyl)phenol + S-adenosyl-L-homocysteine + H(+). It participates in cofactor biosynthesis; ubiquinone biosynthesis. Functionally, O-methyltransferase that catalyzes the 2 O-methylation steps in the ubiquinone biosynthetic pathway. This Methylobacterium nodulans (strain LMG 21967 / CNCM I-2342 / ORS 2060) protein is Ubiquinone biosynthesis O-methyltransferase.